A 270-amino-acid chain; its full sequence is MSTWNDIYNHFDPVAFTLFGFSVHWYGIMYILALLSALGAAKYFVKKDNIPITDALLDNYFFWVEIGVILGARLGYIAIYSGEAVYFFTHPWQIFNPFHNGEFVGIRGMSYHGAVVGFLLATILFCKKYKQNLWQLLDLCALCIPFGYIFGRIGNFLNQELFGRATDVSWGINVFGILRHPSQLYEAALEGLAVFLILFFYRKFKKFDGELIALYAVLYTLARFVCEFFREPDAGIGFIIFGLSMGQILSILMFFGGILAYFFLKKNYIK.

The next 7 helical transmembrane spans lie at 14–34 (VAFT…ILAL), 60–80 (YFFW…IAIY), 103–123 (FVGI…LATI), 133–153 (LWQL…FGRI), 181–201 (PSQL…LFFY), 209–229 (GELI…CEFF), and 235–255 (GIGF…LMFF). Residue Arg152 coordinates a 1,2-diacyl-sn-glycero-3-phospho-(1'-sn-glycerol).

It belongs to the Lgt family.

It localises to the cell inner membrane. The enzyme catalyses L-cysteinyl-[prolipoprotein] + a 1,2-diacyl-sn-glycero-3-phospho-(1'-sn-glycerol) = an S-1,2-diacyl-sn-glyceryl-L-cysteinyl-[prolipoprotein] + sn-glycerol 1-phosphate + H(+). Its pathway is protein modification; lipoprotein biosynthesis (diacylglyceryl transfer). Functionally, catalyzes the transfer of the diacylglyceryl group from phosphatidylglycerol to the sulfhydryl group of the N-terminal cysteine of a prolipoprotein, the first step in the formation of mature lipoproteins. The sequence is that of Phosphatidylglycerol--prolipoprotein diacylglyceryl transferase from Campylobacter curvus (strain 525.92).